The sequence spans 245 residues: 2,3-bisphosphoglycerate-dependent phosphoglycerate mutase (245 aa).

Substrate-binding positions include 8–15 (RHGQSLWN), 21–22 (TG), Arg-60, 87–90 (ERHY), Lys-98, 114–115 (RR), and 183–184 (GN). The active-site Tele-phosphohistidine intermediate is His-9. Glu-87 serves as the catalytic Proton donor/acceptor.

The protein belongs to the phosphoglycerate mutase family. BPG-dependent PGAM subfamily.

It catalyses the reaction (2R)-2-phosphoglycerate = (2R)-3-phosphoglycerate. It participates in carbohydrate degradation; glycolysis; pyruvate from D-glyceraldehyde 3-phosphate: step 3/5. Catalyzes the interconversion of 2-phosphoglycerate and 3-phosphoglycerate. This chain is 2,3-bisphosphoglycerate-dependent phosphoglycerate mutase, found in Bacillus cereus (strain ATCC 14579 / DSM 31 / CCUG 7414 / JCM 2152 / NBRC 15305 / NCIMB 9373 / NCTC 2599 / NRRL B-3711).